The chain runs to 348 residues: LRP2-binding protein (348 aa).

Residues 60–93 (TLAYFLRGQLYFEEGWYEEALEQFEEIEEKDHQA) form a TPR repeat. Sel1-like repeat units follow at residues 94 to 126 (TYQLGVMYYDGLGTILNSEKGVDYMKKILDSPC), 134 to 169 (FAAAYNLGRAYYEGKGVKRSNEEAERLWLFAADNGN), 174 to 207 (VKAQSMLGLYYSTKEPKELEKAFYWHSEACGNGN), 208 to 243 (LESQGALGLMYLYGQGIRQDTEAALHCLREAAERGN), 244 to 278 (VYAQGNLVEYYYKMKFFTKCVAFSKRIADYDEVHD), and 298 to 333 (AMASFYHARCLQLGLGITRDEATAKHYYSKACRLNP).

Interacts with LRP2.

It localises to the cytoplasm. In terms of biological role, may act as an adapter that regulates LRP2 function. The protein is LRP2-binding protein (LRP2BP) of Macaca fascicularis (Crab-eating macaque).